Here is a 778-residue protein sequence, read N- to C-terminus: Hyaluronate lyase (778 aa).

Residues 1-33 (MSWNRRSFLGALGVTCLAGAGMVPIVRPRTAAA) constitute a signal peptide (tat-type signal). Residues Asn-200, His-250, and Tyr-259 contribute to the active site.

This sequence belongs to the polysaccharide lyase 8 family. Post-translationally, predicted to be exported by the Tat system. The position of the signal peptide cleavage has not been experimentally proven.

The catalysed reaction is [hyaluronan](n) = n 3-(4-deoxy-beta-D-gluc-4-enuronosyl)-N-acetyl-D-glucosamine + H2O. Its activity is regulated as follows. Is salt-dependent and is active over a wide range of NaCl concentrations. Activity is slightly promoted by Ni(2+), and inhibited by most of the tested metal ions, including Li(+), K(+), Ba(2+), Mg(2+), Zn(2+), Ca(2+), Mn(2+) and Al(3+). Its function is as follows. Degrades hyaluronic acid into unsaturated disaccharides as the end products. Exhibits very low activity against various types of chondroitin sulfate variants. The chain is Hyaluronate lyase from Thermasporomyces composti.